Consider the following 258-residue polypeptide: Neurotrophin-3 (258 aa).

A signal peptide spans 1–18 (MSILFYVIFLAYLRGIQG). The propeptide occupies 19–139 (NNMDQRSLPE…TNRTSPRRKR (121 aa)). The segment at 60–85 (QSTLPKAEAPREPEQGEATRSEFQPM) is disordered. Residues 67 to 79 (EAPREPEQGEATR) show a composition bias toward basic and acidic residues. A glycan (N-linked (GlcNAc...) asparagine) is linked at asparagine 131. Cystine bridges form between cysteine 153–cysteine 218, cysteine 196–cysteine 247, and cysteine 206–cysteine 249.

Belongs to the NGF-beta family. As to expression, brain and peripheral tissues.

It localises to the secreted. Its function is as follows. Seems to promote the survival of visceral and proprioceptive sensory neurons. The chain is Neurotrophin-3 (Ntf3) from Rattus norvegicus (Rat).